The primary structure comprises 287 residues: GTPase Era (287 aa).

Residues 11–174 form the Era-type G domain; sequence RSGFVAVIGR…RSYLASSLPE (164 aa). GTP contacts are provided by residues 19–26 and 66–70; these read GRTNVGKS and DTPGI. The 69-residue stretch at 205-273 folds into the KH type-2 domain; that stretch reads LRDELPQALA…PLTLRVKVQR (69 aa).

It belongs to the TRAFAC class TrmE-Era-EngA-EngB-Septin-like GTPase superfamily. Era GTPase family. In terms of assembly, monomer.

The protein localises to the cytoplasm. It localises to the cell membrane. Its function is as follows. An essential GTPase that binds both GDP and GTP, with rapid nucleotide exchange. Plays a role in 16S rRNA processing and 30S ribosomal subunit biogenesis and possibly also in cell cycle regulation and energy metabolism. In Acidimicrobium ferrooxidans (strain DSM 10331 / JCM 15462 / NBRC 103882 / ICP), this protein is GTPase Era.